We begin with the raw amino-acid sequence, 572 residues long: 2-succinyl-5-enolpyruvyl-6-hydroxy-3-cyclohexene-1-carboxylate synthase (572 aa).

This sequence belongs to the TPP enzyme family. MenD subfamily. As to quaternary structure, homodimer. Requires Mg(2+) as cofactor. It depends on Mn(2+) as a cofactor. Thiamine diphosphate serves as cofactor.

It catalyses the reaction isochorismate + 2-oxoglutarate + H(+) = 5-enolpyruvoyl-6-hydroxy-2-succinyl-cyclohex-3-ene-1-carboxylate + CO2. The protein operates within quinol/quinone metabolism; 1,4-dihydroxy-2-naphthoate biosynthesis; 1,4-dihydroxy-2-naphthoate from chorismate: step 2/7. It participates in quinol/quinone metabolism; menaquinone biosynthesis. Functionally, catalyzes the thiamine diphosphate-dependent decarboxylation of 2-oxoglutarate and the subsequent addition of the resulting succinic semialdehyde-thiamine pyrophosphate anion to isochorismate to yield 2-succinyl-5-enolpyruvyl-6-hydroxy-3-cyclohexene-1-carboxylate (SEPHCHC). The sequence is that of 2-succinyl-5-enolpyruvyl-6-hydroxy-3-cyclohexene-1-carboxylate synthase from Shewanella amazonensis (strain ATCC BAA-1098 / SB2B).